Here is a 126-residue protein sequence, read N- to C-terminus: Glycine cleavage system H protein (126 aa).

The Lipoyl-binding domain occupies 22–103; the sequence is KAYIGITDYA…PYGSWMALVE (82 aa). N6-lipoyllysine is present on lysine 63.

Belongs to the GcvH family. As to quaternary structure, the glycine cleavage system is composed of four proteins: P, T, L and H. The cofactor is (R)-lipoate.

In terms of biological role, the glycine cleavage system catalyzes the degradation of glycine. The H protein shuttles the methylamine group of glycine from the P protein to the T protein. This chain is Glycine cleavage system H protein, found in Thermoanaerobacter sp. (strain X514).